A 224-amino-acid chain; its full sequence is Probable 2' cyclic ADP-D-ribose synthase BdTIR (224 aa).

Residues 51 to 178 (SRYEVFINHR…RFKFALREAK (128 aa)) form the TIR domain. NAD(+) is bound by residues 60–65 (RGVDTK) and G93. The active site involves E127.

As to quaternary structure, homodimer.

The catalysed reaction is NAD(+) + H2O = ADP-D-ribose + nicotinamide + H(+). It catalyses the reaction NADP(+) + H2O = ADP-D-ribose 2'-phosphate + nicotinamide + H(+). The enzyme catalyses NAD(+) = 2'cADPR + nicotinamide + H(+). An NAD(+) hydrolase (NADase). Upon activation catalyzes cleavage of NAD(+) into ADP-D-ribose (ADPR) and nicotinamide; NAD(+) cleavage triggers a defense system that promotes cell death. In addition to ADPR, also generates a cyclization variant of cyclic ADPR termed v-cADPR (2'cADPR). Also hydrolyzes NADP(+), but not other NAD(+)-related molecules. v-cADPR activates ThsA, an NAD(+) hydrolase in B.cereus (AC J8G6Z1). Probably makes 2'cADPR; the cADPR made by this protein is bound by cmTad1 (AC P0DW61) and activates ThsA from B.cereus. Boiling cmTad1 bound to the cyclic nucleotide releases 2'cADPR, strongly suggesting it is the product of this protein. This is Probable 2' cyclic ADP-D-ribose synthase BdTIR from Brachypodium distachyon (Purple false brome).